The following is a 201-amino-acid chain: Nascent polypeptide-associated complex subunit alpha (201 aa).

The span at 1–20 shows a compositional bias: basic and acidic residues; the sequence is MANPRVEELPDEEVKKTVVD. Disordered regions lie at residues 1–51 and 118–165; these read MANP…SRNE and AQQL…IEDK. The span at 21-36 shows a compositional bias: acidic residues; the sequence is DHDDDSSSDSDGEEET. In terms of domain architecture, NAC-A/B spans 48–113; sequence SRNEKKARKA…AKIEDLNASA (66 aa). The span at 126–149 shows a compositional bias: basic and acidic residues; it reads GHDHDHAGHSHGEAKASEGDAKKE. Positions 150-161 are enriched in acidic residues; sequence EEDDDEEVDADG. A UBA domain is found at 162-200; that stretch reads IEDKDIELVMTQAGVSRTKAIKALKENDNDIVNSIMALS.

It belongs to the NAC-alpha family. Part of the nascent polypeptide-associated complex (NAC), consisting of EGD2 and EGD1. NAC associates with ribosomes via EGD1.

It is found in the cytoplasm. The protein resides in the nucleus. Component of the nascent polypeptide-associated complex (NAC), a dynamic component of the ribosomal exit tunnel, protecting the emerging polypeptides from interaction with other cytoplasmic proteins to ensure appropriate nascent protein targeting. The NAC complex also promotes mitochondrial protein import by enhancing productive ribosome interactions with the outer mitochondrial membrane and blocks the inappropriate interaction of ribosomes translating non-secretory nascent polypeptides with translocation sites in the membrane of the endoplasmic reticulum. EGD2 may also be involved in transcription regulation. This chain is Nascent polypeptide-associated complex subunit alpha (EGD2), found in Pyricularia oryzae (strain 70-15 / ATCC MYA-4617 / FGSC 8958) (Rice blast fungus).